We begin with the raw amino-acid sequence, 68 residues long: DNA-directed RNA polymerase subunit omega (68 aa).

The protein belongs to the RNA polymerase subunit omega family. The RNAP catalytic core consists of 2 alpha, 1 beta, 1 beta' and 1 omega subunit. When a sigma factor is associated with the core the holoenzyme is formed, which can initiate transcription.

The catalysed reaction is RNA(n) + a ribonucleoside 5'-triphosphate = RNA(n+1) + diphosphate. Promotes RNA polymerase assembly. Latches the N- and C-terminal regions of the beta' subunit thereby facilitating its interaction with the beta and alpha subunits. In Neisseria meningitidis serogroup C (strain 053442), this protein is DNA-directed RNA polymerase subunit omega.